Here is a 357-residue protein sequence, read N- to C-terminus: Arginine kinase (357 aa).

Residue alanine 2 is modified to N-acetylalanine. The 83-residue stretch at 9–91 (KLEEGFKKLQ…FDPIIEDYHK (83 aa)) folds into the Phosphagen kinase N-terminal domain. 64 to 68 (GVGVY) is an L-arginine binding site. Residues 119–356 (FVISTRVRCG…LELIKIEKEM (238 aa)) enclose the Phosphagen kinase C-terminal domain. Residues 122–126 (STRVR) and histidine 185 each bind ATP. Position 225 (glutamate 225) interacts with L-arginine. ATP is bound at residue arginine 229. Position 271 (cysteine 271) interacts with L-arginine. ATP contacts are provided by residues 280–284 (RASVH) and 309–314 (RGTRGE). An L-arginine-binding site is contributed by glutamate 314.

The protein belongs to the ATP:guanido phosphotransferase family.

It catalyses the reaction L-arginine + ATP = N(omega)-phospho-L-arginine + ADP + H(+). This chain is Arginine kinase, found in Pachygrapsus marmoratus (Marbled rock crab).